The following is a 599-amino-acid chain: MADKGTDNFDLEGNNWYIVHEAECTDSIDTLDDLCDESNDDSNISNLIDDDVVDQGNSLALYNAQINEDCDNALAHLKRKYNKSPEQAVAELSPQLQAVKITPERHSKRRLFQDSGIFEDEAENSLTQVESESQAGPSSQDGGGDINLLLLQSSNRRATMLAKFKEWYGVSYNEITRIYKSDKSCSDNWVIVIFRAAVEVLESSKIVLKQHCTYIQVKIFGFSALYLVQFKSAKSRETVQKLMCSILNIQEYQMLCDPPKLRSVPTALYFYKHAMLTESSVFGQTPDWIAKQTLVSHQAATTAETFELSRMVQWAYDNNYVDECDIAYHYAMYAEEDANAAAYLKSNNQVKHVRDCSTMVRMYKRYEMRDMSMSEWIYKCCDECSEEGDWKPISQFLKYQGVNILSFLIVLKSFLKGIPKKNCIVIHGPPDTGKSLFCYSFIKFLKGKVVSYVNRSSHFWLQPLMDCKVGFMDDATYVCWTYIDQNLRNALDGNPMCIDAKHRAPQQLKLPPMLITSNIDIKQEQSLMYLHSRIQCFNFPNKMPILDDGSPMYTFTDGTWKSFFQKLGRQLELTDPEEENNGVPSRTFRCTSRSNSDSY.

A Nuclear localization signal motif is present at residues 78-80 (KRK). Ser-84 and Ser-93 each carry phosphoserine; by host. The short motif at 92 to 101 (LSPQLQAVKI) is the Nuclear export signal element. Polar residues predominate over residues 124–140 (NSLTQVESESQAGPSSQ). Residues 124–144 (NSLTQVESESQAGPSSQDGGG) are disordered. A DNA-binding region region spans residues 139 to 303 (SQDGGGDINL…LVSHQAATTA (165 aa)). Residues 402 to 552 (VNILSFLIVL…MPILDDGSPM (151 aa)) enclose the SF3 helicase domain. ATP is bound at residue 428–435 (GPPDTGKS). Lys-509 participates in a covalent cross-link: Glycyl lysine isopeptide (Lys-Gly) (interchain with G-Cter in SUMO). Residues 575–599 (DPEEENNGVPSRTFRCTSRSNSDSY) form a disordered region. Over residues 582-599 (GVPSRTFRCTSRSNSDSY) the composition is skewed to polar residues.

Belongs to the papillomaviridae E1 protein family. Can form hexamers. Interacts with E2 protein; this interaction increases E1 DNA binding specificity. Interacts with host DNA polymerase subunit POLA2. Interacts with host single stranded DNA-binding protein RPA1. Interacts with host TOP1; this interaction stimulates the enzymatic activity of TOP1. Phosphorylated. Post-translationally, sumoylated.

It localises to the host nucleus. The catalysed reaction is Couples ATP hydrolysis with the unwinding of duplex DNA by translocating in the 3'-5' direction.. The enzyme catalyses ATP + H2O = ADP + phosphate + H(+). ATP-dependent DNA 3'-5' helicase required for initiation of viral DNA replication. It forms a complex with the viral E2 protein. The E1-E2 complex binds to the replication origin which contains binding sites for both proteins. During the initial step, a dimer of E1 interacts with a dimer of protein E2 leading to a complex that binds the viral origin of replication with high specificity. Then, a second dimer of E1 displaces the E2 dimer in an ATP-dependent manner to form the E1 tetramer. Following this, two E1 monomers are added to each half of the site, which results in the formation of two E1 trimers on the viral ori. Subsequently, two hexamers will be created. The double hexamer acts as a bi-directional helicase machinery and unwinds the viral DNA and then recruits the host DNA polymerase to start replication. The chain is Replication protein E1 from Homo sapiens (Human).